The following is a 257-amino-acid chain: MANMLEVKHINKTYKGQVSYQALKQISFSIEEGEFTAVMGPSGSGKTTLLNIISTIDRPDSGDILINGENPHRLKRTKLAHFRRKQLGFVFQDFNLLDTLTIGENIMLPLTLEKEAPSVMEEKLHGIAAKLGIENLLNKRTFEVSGGQRQRAAIARAVIHKPSLILADEPTGNLDSKATKDVMETLQSLNRDDHVTALMVTHDPVSASYCRRVIFIKDGELFNEIYRGENRQVFYEQILDVLSMLGGNANDLSSVRL.

The ABC transporter domain maps to 5 to 243 (LEVKHINKTY…FYEQILDVLS (239 aa)). An ATP-binding site is contributed by 40–47 (GPSGSGKT).

It belongs to the ABC transporter superfamily. The complex is composed of two ATP-binding proteins (YxdL) and two transmembrane proteins (YxdM).

In terms of biological role, part of the ABC transporter complex YxdLM which could be involved in peptide resistance. Responsible for energy coupling to the transport system. The sequence is that of ABC transporter ATP-binding protein YxdL (yxdL) from Bacillus subtilis (strain 168).